Here is a 272-residue protein sequence, read N- to C-terminus: 2-amino-3,7-dideoxy-D-threo-hept-6-ulosonate synthase (272 aa).

The Proton acceptor role is filled by aspartate 33. 1-deoxy-D-threo-hexo-2,5-diulose 6-phosphate-binding positions include 33 to 37 and 153 to 155; these read DHGVS and YPR. The active-site Proton donor is the tyrosine 153. The active-site Schiff-base intermediate with substrate is lysine 184. 1-deoxy-D-threo-hexo-2,5-diulose 6-phosphate contacts are provided by residues 209-210 and 237-238; these read GG and GR.

The protein belongs to the DeoC/FbaB aldolase family. ADHS subfamily. In terms of assembly, homodecamer.

It carries out the reaction 1-deoxy-D-threo-hexo-2,5-diulose 6-phosphate + L-aspartate 4-semialdehyde = 2,3-dioxopropyl phosphate + 2-amino-2,3,7-trideoxy-D-lyxo-hept-6-ulosonate. Functionally, catalyzes a transaldol reaction between 6-deoxy-5-ketofructose 1-phosphate (DKFP) and L-aspartate semialdehyde (ASA) with an elimination of hydroxypyruvaldehyde phosphate to yield 2-amino-3,7-dideoxy-D-threo-hept-6-ulosonate (ADH). Plays a key role in an alternative pathway of the biosynthesis of 3-dehydroquinate (DHQ), which is involved in the canonical pathway for the biosynthesis of aromatic amino acids and which is also a precursor for the biosynthesis of p-aminobenzoic acid (PABA) in M.maripaludis. Does not possess fructose-bisphosphate (FBP) aldolase activity. The sequence is that of 2-amino-3,7-dideoxy-D-threo-hept-6-ulosonate synthase from Methanococcus maripaludis (strain DSM 14266 / JCM 13030 / NBRC 101832 / S2 / LL).